The following is a 250-amino-acid chain: uncharacterized protein (250 aa).

This sequence belongs to the carbohydrate kinase PfkB family.

This is an uncharacterized protein from Archaeoglobus fulgidus (strain ATCC 49558 / DSM 4304 / JCM 9628 / NBRC 100126 / VC-16).